A 91-amino-acid chain; its full sequence is Cell division protein FtsB (91 aa).

Residues 1–3 (MKW) are Cytoplasmic-facing. The chain crosses the membrane as a helical span at residues 4 to 21 (LVAVLVVFVAMFQYRLWV). At 22 to 91 (GEGSIADVVR…ETFFMIIDDQ (70 aa)) the chain is on the periplasmic side. Residues 23 to 63 (EGSIADVVRLEREIARQEADNERLRERNKQLAAEVDALKTG) are a coiled coil.

The protein belongs to the FtsB family. As to quaternary structure, part of a complex composed of FtsB, FtsL and FtsQ.

The protein resides in the cell inner membrane. Essential cell division protein. May link together the upstream cell division proteins, which are predominantly cytoplasmic, with the downstream cell division proteins, which are predominantly periplasmic. This is Cell division protein FtsB from Teredinibacter turnerae (strain ATCC 39867 / T7901).